Reading from the N-terminus, the 1171-residue chain is Pyruvate-flavodoxin oxidoreductase (1171 aa).

2 4Fe-4S ferredoxin-type domains span residues 682–711 and 736–767; these read EVPV…PALL and YHLA…MQSL. Residues cysteine 691, cysteine 694, cysteine 697, cysteine 701, cysteine 745, cysteine 748, cysteine 751, cysteine 755, cysteine 811, cysteine 814, cysteine 839, and cysteine 1072 each coordinate [4Fe-4S] cluster.

It belongs to the pyruvate:ferredoxin/flavodoxin oxidoreductase family. [4Fe-4S] cluster is required as a cofactor.

It catalyses the reaction oxidized [flavodoxin] + pyruvate + CoA + 2 H(+) = reduced [flavodoxin] + acetyl-CoA + CO2. Its function is as follows. Oxidoreductase required for the transfer of electrons from pyruvate to flavodoxin, which reduces nitrogenase. The polypeptide is Pyruvate-flavodoxin oxidoreductase (nifJ) (Klebsiella pneumoniae).